The sequence spans 289 residues: ATP synthase subunit a (289 aa).

Transmembrane regions (helical) follow at residues 43 to 63, 101 to 121, 160 to 180, 193 to 213, 232 to 252, and 259 to 279; these read AFHV…VLIF, SAVI…MNAV, LSVF…GGFI, LFVQ…TLIA, VFIL…GLGV, and AVFH…LTIV.

This sequence belongs to the ATPase A chain family. In terms of assembly, F-type ATPases have 2 components, CF(1) - the catalytic core - and CF(0) - the membrane proton channel. CF(1) has five subunits: alpha(3), beta(3), gamma(1), delta(1), epsilon(1). CF(0) has three main subunits: a(1), b(2) and c(9-12). The alpha and beta chains form an alternating ring which encloses part of the gamma chain. CF(1) is attached to CF(0) by a central stalk formed by the gamma and epsilon chains, while a peripheral stalk is formed by the delta and b chains.

The protein localises to the cell inner membrane. Key component of the proton channel; it plays a direct role in the translocation of protons across the membrane. This is ATP synthase subunit a from Pseudomonas syringae pv. syringae (strain B728a).